Reading from the N-terminus, the 282-residue chain is Lipoyl synthase (282 aa).

[4Fe-4S] cluster contacts are provided by Cys37, Cys42, Cys48, Cys63, Cys67, Cys70, and Ser274. In terms of domain architecture, Radical SAM core spans 49-263; that stretch reads WGKGTATFMI…KTIGLEKGFS (215 aa).

It belongs to the radical SAM superfamily. Lipoyl synthase family. The cofactor is [4Fe-4S] cluster.

It localises to the cytoplasm. It carries out the reaction [[Fe-S] cluster scaffold protein carrying a second [4Fe-4S](2+) cluster] + N(6)-octanoyl-L-lysyl-[protein] + 2 oxidized [2Fe-2S]-[ferredoxin] + 2 S-adenosyl-L-methionine + 4 H(+) = [[Fe-S] cluster scaffold protein] + N(6)-[(R)-dihydrolipoyl]-L-lysyl-[protein] + 4 Fe(3+) + 2 hydrogen sulfide + 2 5'-deoxyadenosine + 2 L-methionine + 2 reduced [2Fe-2S]-[ferredoxin]. It participates in protein modification; protein lipoylation via endogenous pathway; protein N(6)-(lipoyl)lysine from octanoyl-[acyl-carrier-protein]: step 2/2. Catalyzes the radical-mediated insertion of two sulfur atoms into the C-6 and C-8 positions of the octanoyl moiety bound to the lipoyl domains of lipoate-dependent enzymes, thereby converting the octanoylated domains into lipoylated derivatives. This chain is Lipoyl synthase, found in Bacteroides thetaiotaomicron (strain ATCC 29148 / DSM 2079 / JCM 5827 / CCUG 10774 / NCTC 10582 / VPI-5482 / E50).